The chain runs to 130 residues: uncharacterized protein (130 aa).

This is an uncharacterized protein from Sinorhizobium fredii (strain NBRC 101917 / NGR234).